A 417-amino-acid chain; its full sequence is 4-hydroxy-3-methylbut-2-en-1-yl diphosphate synthase (flavodoxin) (417 aa).

[4Fe-4S] cluster-binding residues include Cys304, Cys307, Cys350, and Glu357.

Belongs to the IspG family. [4Fe-4S] cluster is required as a cofactor.

The enzyme catalyses (2E)-4-hydroxy-3-methylbut-2-enyl diphosphate + oxidized [flavodoxin] + H2O + 2 H(+) = 2-C-methyl-D-erythritol 2,4-cyclic diphosphate + reduced [flavodoxin]. It participates in isoprenoid biosynthesis; isopentenyl diphosphate biosynthesis via DXP pathway; isopentenyl diphosphate from 1-deoxy-D-xylulose 5-phosphate: step 5/6. Functionally, converts 2C-methyl-D-erythritol 2,4-cyclodiphosphate (ME-2,4cPP) into 1-hydroxy-2-methyl-2-(E)-butenyl 4-diphosphate. This is 4-hydroxy-3-methylbut-2-en-1-yl diphosphate synthase (flavodoxin) from Sinorhizobium medicae (strain WSM419) (Ensifer medicae).